Reading from the N-terminus, the 444-residue chain is MAESLHIVGAGMAGSEAAWQAAEMGVPVVLHEMRPKVGTFAHRTGQFAEMVCSNSFRSDDDERNAVGLLHWEMRAARGLIMEMAAAHRLPAGGALAVDRDPFAESVTGRLRAHPLISVVEEEVADLPSSGNWIVATGPLTSSALAESLRALTGAEALAFFDAIAPIVYAETIDMEVAWRQSRYDKGETEDERTAYINCPMNREQYEAFIDALLAAEKTEFHEGETAGYFDGCLPIEVMAERGRETLRHGPMKPVGLTNSHRPEEKAHAVVQLRRDNKLGTLYNIVGFQTKMKYGAQTAVFKMIPGLENASFARLGGIHRNTFLNSPTLLDDRMRLKLRPNIRFAGQVTGVEGYVESAAMGLLAGRMAAAEILGRDLPPPPPETAMGALVTHITGGAEAKSFQPMNVNFGLFPPIDARGGRRGRKDRYKAYTDRAKAAFTEWLGA.

FAD is bound at residue 9–14 (GAGMAG).

This sequence belongs to the MnmG family. TrmFO subfamily. FAD is required as a cofactor.

The protein localises to the cytoplasm. The enzyme catalyses uridine(54) in tRNA + (6R)-5,10-methylene-5,6,7,8-tetrahydrofolate + NADH + H(+) = 5-methyluridine(54) in tRNA + (6S)-5,6,7,8-tetrahydrofolate + NAD(+). It carries out the reaction uridine(54) in tRNA + (6R)-5,10-methylene-5,6,7,8-tetrahydrofolate + NADPH + H(+) = 5-methyluridine(54) in tRNA + (6S)-5,6,7,8-tetrahydrofolate + NADP(+). Functionally, catalyzes the folate-dependent formation of 5-methyl-uridine at position 54 (M-5-U54) in all tRNAs. The chain is Methylenetetrahydrofolate--tRNA-(uracil-5-)-methyltransferase TrmFO from Cereibacter sphaeroides (strain ATCC 17023 / DSM 158 / JCM 6121 / CCUG 31486 / LMG 2827 / NBRC 12203 / NCIMB 8253 / ATH 2.4.1.) (Rhodobacter sphaeroides).